The sequence spans 504 residues: Probable GTP-binding protein OBGC2 (504 aa).

The segment covering 24–39 (AHRDARPALRLPELHA) has biased composition (basic and acidic residues). Disordered regions lie at residues 24 to 46 (AHRDARPALRLPELHATRRRRNN) and 93 to 122 (VLAMPASPSTDAPKSPRRRSDKGKRSGVKK). The Obg domain occupies 73–276 (HKYFDHAVVT…VSLELILRVV (204 aa)). Over residues 107 to 122 (SPRRRSDKGKRSGVKK) the composition is skewed to basic residues. The OBG-type G domain occupies 277–494 (ADVGLVGLPN…MLKEIRAALR (218 aa)). GTP contacts are provided by residues 283 to 290 (GLPNAGKS) and 337 to 341 (DLPGL). Positions 436–452 (SEDSLNGNTGEHNTSSE) are enriched in polar residues. The interval 436-463 (SEDSLNGNTGEHNTSSETKVEGGEKELR) is disordered. A compositionally biased stretch (basic and acidic residues) spans 453–463 (TKVEGGEKELR).

It belongs to the TRAFAC class OBG-HflX-like GTPase superfamily. OBG GTPase family.

May bind GTP and have GTPase activity. This chain is Probable GTP-binding protein OBGC2, found in Oryza sativa subsp. japonica (Rice).